Here is a 447-residue protein sequence, read N- to C-terminus: Probable aspartic protease At2g35615 (447 aa).

The signal sequence occupies residues 1-20 (MATQILLCFFLFFSVTLSSS). Asparagine 25 carries N-linked (GlcNAc...) asparagine glycosylation. In terms of domain architecture, Peptidase A1 spans 85–439 (FFMSITIGTP…DLETRTVSFQ (355 aa)). Aspartate 103 is a catalytic residue. A glycan (N-linked (GlcNAc...) asparagine) is linked at asparagine 251. The active site involves aspartate 326.

It belongs to the peptidase A1 family.

Its subcellular location is the secreted. This is Probable aspartic protease At2g35615 from Arabidopsis thaliana (Mouse-ear cress).